The primary structure comprises 430 residues: Maintenance of mitochondrial morphology protein 1 (430 aa).

The Lumenal portion of the chain corresponds to 1–70 (MSQGLIETTT…NGNTWSFTQG (70 aa)). Residues 71–91 (LVIGQISVIFIIIVFVKFFVF) traverse the membrane as a helical segment. The Cytoplasmic segment spans residues 92–430 (ADSSSHIPTK…TPGEFVNSNI (339 aa)). The SMP-LTD domain maps to 159–387 (ASESLDWFNV…EPRFQVVRLP (229 aa)). The tract at residues 305 to 326 (GYSKENGSADSASDNDEDEDDG) is disordered. Residues 317 to 326 (SDNDEDEDDG) show a composition bias toward acidic residues.

The protein belongs to the MMM1 family. As to quaternary structure, homodimer. Component of the ER-mitochondria encounter structure (ERMES) or MDM complex, composed of MMM1, MDM10, MDM12 and MDM34. An MMM1 homodimer associates with one molecule of MDM12 on each side in a pairwise head-to-tail manner, and the SMP-LTD domains of MMM1 and MDM12 generate a continuous hydrophobic tunnel for phospholipid trafficking.

The protein resides in the endoplasmic reticulum membrane. In terms of biological role, component of the ERMES/MDM complex, which serves as a molecular tether to connect the endoplasmic reticulum (ER) and mitochondria. Components of this complex are involved in the control of mitochondrial shape and protein biogenesis, and function in nonvesicular lipid trafficking between the ER and mitochondria. The MDM12-MMM1 subcomplex functions in the major beta-barrel assembly pathway that is responsible for biogenesis of all outer membrane beta-barrel proteins, and acts in a late step after the SAM complex. The MDM10-MDM12-MMM1 subcomplex further acts in the TOM40-specific pathway after the action of the MDM12-MMM1 complex. Essential for establishing and maintaining the structure of mitochondria and maintenance of mtDNA nucleoids. This Candida dubliniensis (strain CD36 / ATCC MYA-646 / CBS 7987 / NCPF 3949 / NRRL Y-17841) (Yeast) protein is Maintenance of mitochondrial morphology protein 1.